We begin with the raw amino-acid sequence, 294 residues long: Kynurenine formamidase (294 aa).

Residues 1-14 (MSRWKDMNKDELER) are compositionally biased toward basic and acidic residues. Positions 1-20 (MSRWKDMNKDELERQFSPSQ) are disordered. The HGGXW signature appears at 84-88 (HGGYW). S153 (nucleophile) is an active-site residue. Active-site residues include D236 and H269.

This sequence belongs to the kynurenine formamidase family. Homodimer.

Its subcellular location is the cytoplasm. It is found in the cytosol. It localises to the nucleus. It carries out the reaction N-formyl-L-kynurenine + H2O = L-kynurenine + formate + H(+). It participates in amino-acid degradation; L-tryptophan degradation via kynurenine pathway; L-kynurenine from L-tryptophan: step 2/2. Its function is as follows. Catalyzes the hydrolysis of N-formyl-L-kynurenine to L-kynurenine, the second step in the kynurenine pathway of tryptophan degradation. Kynurenine may be further oxidized to nicotinic acid, NAD(H) and NADP(H). Required for elimination of toxic metabolites. The protein is Kynurenine formamidase (afmid) of Salmo salar (Atlantic salmon).